A 527-amino-acid polypeptide reads, in one-letter code: Ribonuclease Y (527 aa).

A helical transmembrane segment spans residues 21–41 (ILAIFFSFIIGIVFGGMALFV). Positions 78 to 97 (READKTRNSAETELKERRSE) are disordered. In terms of domain architecture, KH spans 217-302 (TTNVVPLPSD…EVVTKAKEEV (86 aa)). The 94-residue stretch at 343–436 (VLQHSIEVAQ…VSAADAISSA (94 aa)) folds into the HD domain.

The protein belongs to the RNase Y family.

Its subcellular location is the cell membrane. In terms of biological role, endoribonuclease that initiates mRNA decay. This Dehalococcoides mccartyi (strain ATCC BAA-2100 / JCM 16839 / KCTC 5957 / BAV1) protein is Ribonuclease Y.